The chain runs to 214 residues: A-type ATP synthase subunit D (214 aa).

It belongs to the V-ATPase D subunit family. As to quaternary structure, has multiple subunits with at least A(3), B(3), C, D, E, F, H, I and proteolipid K(x).

It localises to the cell membrane. Functionally, component of the A-type ATP synthase that produces ATP from ADP in the presence of a proton gradient across the membrane. The sequence is that of A-type ATP synthase subunit D from Pyrococcus furiosus (strain ATCC 43587 / DSM 3638 / JCM 8422 / Vc1).